Here is a 210-residue protein sequence, read N- to C-terminus: Chaperone protein TorD (210 aa).

This sequence belongs to the TorD/DmsD family. TorD subfamily.

It localises to the cytoplasm. Its function is as follows. Involved in the biogenesis of TorA. Acts on TorA before the insertion of the molybdenum cofactor and, as a result, probably favors a conformation of the apoenzyme that is competent for acquiring the cofactor. This Salmonella paratyphi B (strain ATCC BAA-1250 / SPB7) protein is Chaperone protein TorD.